We begin with the raw amino-acid sequence, 90 residues long: Conotoxin TxMMSK-06 (90 aa).

The signal sequence occupies residues 1–22; the sequence is MMSKLGVLLTICLLLFPHTAVP. Positions 23-74 are excised as a propeptide; that stretch reads LDGDQHADQPAERLQDDISSEHHPMLNSIRRREQNQFMSFTSVKLRDSRGER. The interval 24-43 is disordered; the sequence is DGDQHADQPAERLQDDISSE. A compositionally biased stretch (basic and acidic residues) spans 25 to 43; sequence GDQHADQPAERLQDDISSE. Disulfide bonds link Cys75-Cys89, Cys76-Cys85, and Cys81-Cys88. Position 87 is a 4-hydroxyproline (Pro87). Cysteine amide is present on Cys89.

Belongs to the conotoxin M superfamily. In terms of tissue distribution, expressed by the venom duct.

The protein resides in the secreted. In Conus textile (Cloth-of-gold cone), this protein is Conotoxin TxMMSK-06.